The primary structure comprises 299 residues: Probable alpha-L-glutamate ligase 2 (299 aa).

One can recognise an ATP-grasp domain in the interval 104 to 287 (MQLMSRRGIG…VAGAIIEFVE (184 aa)). ATP is bound by residues Lys-141, 178–179 (EY), Asp-187, and 211–213 (RSN). 3 residues coordinate Mg(2+): Asp-248, Glu-260, and Asn-262. Mn(2+) is bound by residues Asp-248, Glu-260, and Asn-262.

The protein belongs to the RimK family. Mg(2+) serves as cofactor. The cofactor is Mn(2+).

The chain is Probable alpha-L-glutamate ligase 2 from Shewanella sp. (strain MR-4).